The primary structure comprises 289 residues: Digeranylgeranylglyceryl phosphate synthase (289 aa).

8 helical membrane passes run 18–38 (LMAGFAAAIGTLIAFNILISG), 47–67 (AFPFLDAGLVFLVVFLVSGAG), 99–119 (FYFSYLLFALGTLIAFSINSI), 120–140 (CGSIALFNSLLLILYAKTLKG), 163–183 (IFGFGGIKALSVLFLLAALAI), 218–238 (LAVLTGLLAVILSPLPYFMSV), 243–263 (YIYLVSLADLGFLAAIIQLLV), and 269–289 (KSSKLFKIAMFFALIAFIAGV).

It belongs to the UbiA prenyltransferase family. DGGGP synthase subfamily. The cofactor is Mg(2+).

The protein localises to the cell membrane. It catalyses the reaction sn-3-O-(geranylgeranyl)glycerol 1-phosphate + (2E,6E,10E)-geranylgeranyl diphosphate = 2,3-bis-O-(geranylgeranyl)-sn-glycerol 1-phosphate + diphosphate. Its pathway is membrane lipid metabolism; glycerophospholipid metabolism. In terms of biological role, prenyltransferase that catalyzes the transfer of the geranylgeranyl moiety of geranylgeranyl diphosphate (GGPP) to the C2 hydroxyl of (S)-3-O-geranylgeranylglyceryl phosphate (GGGP). This reaction is the second ether-bond-formation step in the biosynthesis of archaeal membrane lipids. This Methanosarcina mazei (strain ATCC BAA-159 / DSM 3647 / Goe1 / Go1 / JCM 11833 / OCM 88) (Methanosarcina frisia) protein is Digeranylgeranylglyceryl phosphate synthase.